We begin with the raw amino-acid sequence, 123 residues long: uncharacterized protein (123 aa).

4 helical membrane-spanning segments follow: residues Leu9–Phe31, Val38–Val56, Val67–Tyr91, and Val98–Ala114.

It to E.coli YhgE.

Its subcellular location is the cell membrane. This is an uncharacterized protein from Bacillus subtilis (strain 168).